The chain runs to 493 residues: Galactose-1-phosphate uridylyltransferase (493 aa).

It belongs to the galactose-1-phosphate uridylyltransferase type 2 family.

The protein resides in the cytoplasm. The enzyme catalyses alpha-D-galactose 1-phosphate + UDP-alpha-D-glucose = alpha-D-glucose 1-phosphate + UDP-alpha-D-galactose. Its pathway is carbohydrate metabolism; galactose metabolism. This is Galactose-1-phosphate uridylyltransferase from Streptococcus pneumoniae serotype 19F (strain G54).